We begin with the raw amino-acid sequence, 198 residues long: MICOS complex subunit Mic26 (198 aa).

A signal peptide spans 1–23; that stretch reads MFKVIQRSVGPASLSLLTFRVYA. An N-linked (GlcNAc...) asparagine glycan is attached at Asn-63. Residues 108–128 form a helical membrane-spanning segment; it reads PGFFPRLGVIGFAGFVGLLFA.

Belongs to the apolipoprotein O/MICOS complex subunit Mic27 family. As to quaternary structure, component of the mitochondrial contact site and cristae organizing system (MICOS) complex, composed of at least MICOS10/MIC10, CHCHD3/MIC19, CHCHD6/MIC25, APOOL/MIC27, IMMT/MIC60, APOO/MIC23/MIC26 and MICOS13/MIC13. This complex was also known under the names MINOS or MitOS complex. The MICOS complex associates with mitochondrial outer membrane proteins SAMM50, MTX1 and MTX2 (together described as components of the mitochondrial outer membrane sorting assembly machinery (SAM) complex) and DNAJC11, mitochondrial inner membrane protein TMEM11 and with HSPA9. The MICOS and SAM complexes together with DNAJC11 are part of a large protein complex spanning both membranes termed the mitochondrial intermembrane space bridging (MIB) complex. Interacts with IMMT/MIC60. Interacts with MICOS10/MIC10 and APOOL/MIC27.

The protein localises to the mitochondrion inner membrane. It localises to the mitochondrion. It is found in the endoplasmic reticulum membrane. Its subcellular location is the golgi apparatus membrane. In terms of biological role, component of the MICOS complex, a large protein complex of the mitochondrial inner membrane that plays crucial roles in the maintenance of crista junctions, inner membrane architecture, and formation of contact sites to the outer membrane. Plays a crucial role in crista junction formation and mitochondrial function. Can induce cardiac lipotoxicity by enhancing mitochondrial respiration and fatty acid metabolism in cardiac myoblasts. Promotes cholesterol efflux from macrophage cells. Detected in HDL, LDL and VLDL. Secreted by a microsomal triglyceride transfer protein (MTTP)-dependent mechanism, probably as a VLDL-associated protein that is subsequently transferred to HDL. This is MICOS complex subunit Mic26 (Apoo) from Mus musculus (Mouse).